A 144-amino-acid polypeptide reads, in one-letter code: Small ribosomal subunit protein eS19A (144 aa).

It belongs to the eukaryotic ribosomal protein eS19 family. In terms of assembly, component of the small ribosomal subunit (SSU). Mature yeast ribosomes consist of a small (40S) and a large (60S) subunit. The 40S small subunit contains 1 molecule of ribosomal RNA (18S rRNA) and 33 different proteins (encoded by 57 genes). The large 60S subunit contains 3 rRNA molecules (25S, 5.8S and 5S rRNA) and 46 different proteins (encoded by 81 genes).

Its subcellular location is the cytoplasm. Component of the ribosome, a large ribonucleoprotein complex responsible for the synthesis of proteins in the cell. The small ribosomal subunit (SSU) binds messenger RNAs (mRNAs) and translates the encoded message by selecting cognate aminoacyl-transfer RNA (tRNA) molecules. The large subunit (LSU) contains the ribosomal catalytic site termed the peptidyl transferase center (PTC), which catalyzes the formation of peptide bonds, thereby polymerizing the amino acids delivered by tRNAs into a polypeptide chain. The nascent polypeptides leave the ribosome through a tunnel in the LSU and interact with protein factors that function in enzymatic processing, targeting, and the membrane insertion of nascent chains at the exit of the ribosomal tunnel. eS19 is required for proper maturation of the small (40S) ribosomal subunit. Binds to 40S pre-ribosomal particles, probably required after association of NOC4 but before association of ENP1, TSR1 and RIO2 with 20/21S pre-rRNA. The chain is Small ribosomal subunit protein eS19A from Saccharomyces cerevisiae (strain ATCC 204508 / S288c) (Baker's yeast).